The following is a 309-amino-acid chain: Probable manganese-dependent inorganic pyrophosphatase (309 aa).

Mn(2+)-binding residues include His9, Asp13, Asp15, Asp75, His97, and Asp149.

The protein belongs to the PPase class C family. Requires Mn(2+) as cofactor.

It localises to the cytoplasm. It catalyses the reaction diphosphate + H2O = 2 phosphate + H(+). The protein is Probable manganese-dependent inorganic pyrophosphatase of Staphylococcus epidermidis (strain ATCC 12228 / FDA PCI 1200).